The chain runs to 1226 residues: Methionine synthase (1226 aa).

A Hcy-binding domain is found at 6–326; it reads RQQIEAQLKQ…EHIRQMAQAV (321 aa). Zn(2+) contacts are provided by Cys248, Cys311, and Cys312. One can recognise a Pterin-binding domain in the interval 357-618; the sequence is FINVGERTNV…VPEKLREAVE (262 aa). The region spanning 651 to 745 is the B12-binding N-terminal domain; it reads SALEWRTWPV…FINAEKQSGS (95 aa). Methylcob(III)alamin contacts are provided by residues Glu695, 757–761, His760, Ser805, Thr809, and Ala861; that span reads GDVHD. Positions 747-882 constitute a B12-binding domain; the sequence is NGKILLATVK…SDERRPAFIE (136 aa). Residues 898-1226 enclose the AdoMet activation domain; the sequence is KKPRTKPVTL…EKWLGPNING (329 aa). S-adenosyl-L-methionine contacts are provided by residues Asp948, Arg1136, and 1191–1192; that span reads YF.

This sequence belongs to the vitamin-B12 dependent methionine synthase family. Methylcob(III)alamin is required as a cofactor. Zn(2+) serves as cofactor.

It catalyses the reaction (6S)-5-methyl-5,6,7,8-tetrahydrofolate + L-homocysteine = (6S)-5,6,7,8-tetrahydrofolate + L-methionine. Its pathway is amino-acid biosynthesis; L-methionine biosynthesis via de novo pathway; L-methionine from L-homocysteine (MetH route): step 1/1. Its function is as follows. Catalyzes the transfer of a methyl group from methyl-cobalamin to homocysteine, yielding enzyme-bound cob(I)alamin and methionine. Subsequently, remethylates the cofactor using methyltetrahydrofolate. In Vibrio parahaemolyticus serotype O3:K6 (strain RIMD 2210633), this protein is Methionine synthase (metH).